The primary structure comprises 250 residues: MPDNASAQQPGQPAQGPNEHYHQPLNQPRALRIGVAGPVGTGKSSILATLCRELAGELSMAVVTNDIYTDEDARFLRSAGVLPTERIRAVETGACPHTAIRDDVSANLDAVEDLEEAYGPLDLVLIESGGDNLTATFSPALADAQLFSIDVAGGGDVARKGGPGITGADLLVINKTDLAPHVEVDVTAMVADAERARDGLPVLALSKHDPESIARLADWVRAVLVRHRSGTHVPTDPGPMAPHSHSHDGS.

The disordered stretch occupies residues 1–24 (MPDNASAQQPGQPAQGPNEHYHQP). Residues 7–17 (AQQPGQPAQGP) show a composition bias toward low complexity. A GTP-binding site is contributed by 37-44 (GPVGTGKS). The disordered stretch occupies residues 230–250 (GTHVPTDPGPMAPHSHSHDGS).

Belongs to the SIMIBI class G3E GTPase family. UreG subfamily. Homodimer. UreD, UreF and UreG form a complex that acts as a GTP-hydrolysis-dependent molecular chaperone, activating the urease apoprotein by helping to assemble the nickel containing metallocenter of UreC. The UreE protein probably delivers the nickel.

It is found in the cytoplasm. In terms of biological role, facilitates the functional incorporation of the urease nickel metallocenter. This process requires GTP hydrolysis, probably effectuated by UreG. In Streptomyces griseus subsp. griseus (strain JCM 4626 / CBS 651.72 / NBRC 13350 / KCC S-0626 / ISP 5235), this protein is Urease accessory protein UreG 3.